A 628-amino-acid chain; its full sequence is MSLAVRPPVCLLCRSGAPTLLPSSVSQVARSMATARLRRKVARMALSPDVAKSSINQKRSGKAKFGPWSGMNQTEAHIRGEPRSRSQAALRRSGEKAADTPRKSDSPLYKALKMQTTLAPVPYGRRTAVKSKIADITSFDHFPLLPVVRHSIFSQALPGLVDVTPTPIQRLAIPKLMEDSPDGKRGTKLEDGDPQYDQYLLAAETGSGKTLAYLLPLVDAVKRLEVEDKENERKEEERKAKEKEERLKNRAFDLEPEEPPLSNAGRPRVIILVPTSELVAQVGVKVKALAHTVKYRSGMISSNLTPRRIKSTLFNPDGIDILVSTPHLLASIAKTEPYVLSRVSHLVLDEADSLMDRSFLPTTTEIISKVAPSLRKLILCSATIPRSLDNLLRKRYPDIKRLTTPNLHAIPRRVQLGVVDIQKEPYRGNRNLACADVIWSIGKAGDSEPSEPFASYVGPNIKKILVFVNEREEADEVAQFLRSKGIDAQSLSRDSSARKQEEILAEFTESAPPPSPEEIMLAQKKRRQEDAIPFELPENHNKPENVRRLANTKVLVTTDLASRGIDTLPVKTVILYHVPHTTIDFIHRLGRLGRMNKRGRGIVLVGKKDRKDVVKEVREGMFRGQALI.

A mitochondrion-targeting transit peptide spans 1-40 (MSLAVRPPVCLLCRSGAPTLLPSSVSQVARSMATARLRRK). The segment at 51–109 (AKSSINQKRSGKAKFGPWSGMNQTEAHIRGEPRSRSQAALRRSGEKAADTPRKSDSPLY) is disordered. A compositionally biased stretch (basic and acidic residues) spans 92–105 (RSGEKAADTPRKSD). Residues 137–170 (TSFDHFPLLPVVRHSIFSQALPGLVDVTPTPIQR) carry the Q motif motif. Positions 190 to 402 (EDGDPQYDQY…RKRYPDIKRL (213 aa)) constitute a Helicase ATP-binding domain. 203–210 (AETGSGKT) provides a ligand contact to ATP. Over residues 228–253 (DKENERKEEERKAKEKEERLKNRAFD) the composition is skewed to basic and acidic residues. A disordered region spans residues 228–260 (DKENERKEEERKAKEKEERLKNRAFDLEPEEPP). A DEAD box motif is present at residues 349–352 (DEAD). The 173-residue stretch at 456 to 628 (YVGPNIKKIL…EGMFRGQALI (173 aa)) folds into the Helicase C-terminal domain.

Belongs to the DEAD box helicase family. MRH4 subfamily.

Its subcellular location is the mitochondrion. It catalyses the reaction ATP + H2O = ADP + phosphate + H(+). ATP-binding RNA helicase involved in mitochondrial RNA metabolism. Required for maintenance of mitochondrial DNA. In Aspergillus oryzae (strain ATCC 42149 / RIB 40) (Yellow koji mold), this protein is ATP-dependent RNA helicase mrh4, mitochondrial (mrh4).